Here is a 94-residue protein sequence, read N- to C-terminus: Viral macrophage inflammatory protein 2 (94 aa).

Positions 1–20 are cleaved as a signal peptide; the sequence is MDTKGILLVAVLTALLCLQS. Cystine bridges form between Cys-34–Cys-58 and Cys-35–Cys-74.

Belongs to the intercrine beta (chemokine CC) family. As to quaternary structure, monomer. Interacts with human chemokine receptor CXCR4.

The protein resides in the secreted. Its function is as follows. Blocks infection by several different human immunodeficiency virus type 1 (HIV-1) strains. This occurs because vMIP-II binds to a wide range of chemokine receptors. May form part of the response to host defenses contributing to virus-induced neoplasia and may have relevance to KSHV and HIV-I interactions. This Human herpesvirus 8 type P (isolate GK18) (HHV-8) protein is Viral macrophage inflammatory protein 2 (ORF K4).